Here is a 212-residue protein sequence, read N- to C-terminus: Regulatory protein RecX (212 aa).

This sequence belongs to the RecX family.

It is found in the cytoplasm. Its function is as follows. Modulates RecA activity. This is Regulatory protein RecX from Clostridium botulinum (strain Alaska E43 / Type E3).